Here is a 28-residue protein sequence, read N- to C-terminus: FWGALFKTVAKVVAPFVPDIVKWVQEKV.

In terms of tissue distribution, expressed by the venom gland.

The protein resides in the secreted. Antimicrobial peptide active against Gram-negative bacterium E.coli MH1 (MIC=3.5 uM) and P.aeruginosa PAO1 (MIC=10 uM) and against Gram-positive bacterium A.globiformis VKM Ac-1112 (MIC=1.25 uM). The chain is M-ectatotoxin-Eb2c from Ectatomma brunneum (Ant).